A 783-amino-acid polypeptide reads, in one-letter code: ATP-dependent DNA helicase Hel308 (783 aa).

ATP contacts are provided by residues Gln29 and 47-54 (VPTASGKT). The region spanning 34–209 (ERGVTEGANL…WLDAELVDSD (176 aa)) is the Helicase ATP-binding domain. A DEAH box motif is present at residues 154-157 (DEVH). Positions 242-443 (QTAAVVADTL…EPALRTHVLA (202 aa)) constitute a Helicase C-terminal domain. Positions 744 to 783 (ETVGHPDPGMDGVAADTDAAPESGGEAGGDEGQASLGDFS) are disordered.

Belongs to the helicase family. Hel308 subfamily. Monomer.

The catalysed reaction is Couples ATP hydrolysis with the unwinding of duplex DNA by translocating in the 3'-5' direction.. The enzyme catalyses ATP + H2O = ADP + phosphate + H(+). Its function is as follows. DNA-dependent ATPase and 3'-5' DNA helicase that may be involved in repair of stalled replication forks. This is ATP-dependent DNA helicase Hel308 from Halobacterium salinarum (strain ATCC 700922 / JCM 11081 / NRC-1) (Halobacterium halobium).